The sequence spans 852 residues: MSSVSPIQIPSRLPLLLTHEGVLLPGSTMRTSVDSARNLQLVRSRLLKGTSLQSTILGVIPNTPDPASDAQDLPPLHRIGTAALAVQVVGSNWPKPHYTLLITGLCRFQITQVVREKPYPVAEVEQLDRLEEFPNTCKTREELGELSEQFYKYAVQLVEMLDMSVPAVAKLRRLLDSLPREALPDILTSIIRTSNKEKLQILDAVSLEERFKMTIPLLVRQIEGLKLLQKTRKHKQDDDKRVIAIRPMRRITHVPGALADEDEDEDNDDIVMLEKKIRTSSMPEQAHKVCVKEIKRLKKMPQSMPEYALTRNYLELMVELPWNKSTTDRLDIRAARVLLDNDHYAMEKLKKRVLEYLAVRQLKNNLKGPILCFVGPPGVGKTSVGRSVAKTLGREFHRIALGGVCDQSDIRGHRRTYVGSMPGRIINGLKTVGVNNPVFLLDEVDKLGKSLQGDPAAALLEVLDPEQNHNFTDHYLNVAFDLSQVLFIATANTTASIPPALLDRMEIIQVPGYTQEEKIEIAHRHLIPKQLEQHGLTPQQIQIPQVTTLDIITRYTREAGVRSLDRKLGAICRAVAVKVAEGQHREAKLDRPDVAEGEGCKEHLLEDGKSDPVSDTTDLALPPEMPILIDFHALKDILGPPMYEMEVSERLSQPGVAIGLAWTPLGGEIMFVEASRMDGEGQLTLTGQLGNVMKESAHLAISWLRSNAKKYHLTNASGSFDLLENTDIHLHFPAGAVTKDGPSAGVTIATCLASLFSGRLVRSDVAMTGEITLRGLVLPVGGIKDKALAAHRAGLKRVIIPQRNEKDLEEIPANVRQDLSFITASCLDEVLNAAFDGGFTVKARPGLLNSKL.

Ser-2 carries the post-translational modification N-acetylserine. The 210-residue stretch at 13–222 folds into the Lon N-terminal domain; it reads LPLLLTHEGV…MTIPLLVRQI (210 aa). 375–382 contacts ATP; sequence GPPGVGKT. The region spanning 651–837 is the Lon proteolytic domain; it reads LSQPGVAIGL…DEVLNAAFDG (187 aa). Catalysis depends on residues Ser-743 and Lys-786. Positions 850 to 852 match the Microbody targeting signal motif; sequence SKL.

Belongs to the peptidase S16 family. In terms of assembly, interacts with PEX5. Interacts with TYSND1. May interact with enzymes involved in beta-oxidation of fatty acids, including ACOX1/AOX.

The protein resides in the peroxisome matrix. It catalyses the reaction Hydrolysis of proteins in presence of ATP.. Functionally, ATP-dependent serine protease that mediates the selective degradation of misfolded and unassembled polypeptides in the peroxisomal matrix. Necessary for type 2 peroxisome targeting signal (PTS2)-containing protein processing and facilitates peroxisome matrix protein import. May indirectly regulate peroxisomal fatty acid beta-oxidation through degradation of the self-processed forms of TYSND1. This chain is Lon protease homolog 2, peroxisomal, found in Bos taurus (Bovine).